Here is a 1015-residue protein sequence, read N- to C-terminus: Putative ankyrin repeat protein R96 (1015 aa).

Residues 1-14 (MSTVKKSSKKKSSK) show a composition bias toward basic residues. A disordered region spans residues 1–37 (MSTVKKSSKKKSSKKSSSGNESSKKSSPKIVPKHTAK). ANK repeat units follow at residues 136–165 (NGHK…NIDF), 168–201 (APSN…AVNI), 202–231 (DGRS…DVEV), 340–370 (LGHN…DFQA), 374–403 (NITN…KIVS), 456–485 (SGYR…TIFA), 498–527 (NNND…QFQL), and 535–564 (TVPT…ITDC).

In Acanthamoeba polyphaga mimivirus (APMV), this protein is Putative ankyrin repeat protein R96.